The sequence spans 481 residues: Glutamyl-tRNA(Gln) amidotransferase subunit A (481 aa).

Catalysis depends on charge relay system residues lysine 74 and serine 149. The Acyl-ester intermediate role is filled by serine 173.

The protein belongs to the amidase family. GatA subfamily. Heterotrimer of A, B and C subunits.

The catalysed reaction is L-glutamyl-tRNA(Gln) + L-glutamine + ATP + H2O = L-glutaminyl-tRNA(Gln) + L-glutamate + ADP + phosphate + H(+). Functionally, allows the formation of correctly charged Gln-tRNA(Gln) through the transamidation of misacylated Glu-tRNA(Gln) in organisms which lack glutaminyl-tRNA synthetase. The reaction takes place in the presence of glutamine and ATP through an activated gamma-phospho-Glu-tRNA(Gln). This chain is Glutamyl-tRNA(Gln) amidotransferase subunit A, found in Francisella tularensis subsp. novicida (strain U112).